A 207-amino-acid chain; its full sequence is Vascular endothelial growth factor B (207 aa).

Positions 1–21 are cleaved as a signal peptide; sequence MSPLLRRLLLAVLLQLAPAQA. 3 disulfides stabilise this stretch: C47-C89, C78-C122, and C82-C124. Basic and acidic residues predominate over residues 124–139; that stretch reads CRPKKRESAVKPDRAS. Positions 124–207 are disordered; that stretch reads CRPKKRESAV…AASSVVKGGA (84 aa). The span at 174–201 shows a compositional bias: low complexity; that stretch reads PSAHAAPSAASALTPGPATAAADAAASS.

The protein belongs to the PDGF/VEGF growth factor family. In terms of assembly, homodimer; disulfide-linked. Can also form heterodimer with VEGF. In terms of processing, VEGF-B186 is O-glycosylated.

It is found in the secreted. Functionally, growth factor for endothelial cells. VEGF-B167 binds heparin and neuropilin-1 whereas the binding to neuropilin-1 of VEGF-B186 is regulated by proteolysis. The sequence is that of Vascular endothelial growth factor B (VEGFB) from Bos taurus (Bovine).